The primary structure comprises 647 residues: Nucleolar GTP-binding protein 1 (647 aa).

The OBG-type G domain maps to 168-340; that stretch reads RTLLICGYPN…VRNKACEKLL (173 aa). GTP-binding positions include 174 to 181, 220 to 224, and 288 to 291; these read GYPNVGKS, DTPGI, and NKTD. Ser-563 carries the phosphoserine modification. Residues 594-647 form a disordered region; that stretch reads ADGSMRSKADRMAKMERRERNRHAKQGESDRHNAVSLSKHLFSGKRGVGKTDFR. Over residues 598 to 626 the composition is skewed to basic and acidic residues; that stretch reads MRSKADRMAKMERRERNRHAKQGESDRHN.

It belongs to the TRAFAC class OBG-HflX-like GTPase superfamily. OBG GTPase family. NOG subfamily. In terms of assembly, associated with nucleolar and cytoplasmic pre-60S particles. Directly interacts with RLP24.

The protein resides in the nucleus. The protein localises to the nucleolus. In terms of biological role, involved in the biogenesis of the 60S ribosomal subunit. The protein is Nucleolar GTP-binding protein 1 (NOG1) of Saccharomyces cerevisiae (strain ATCC 204508 / S288c) (Baker's yeast).